Here is a 415-residue protein sequence, read N- to C-terminus: Mitochondrial tRNA-specific 2-thiouridylase 1 (415 aa).

ATP-binding positions include 37 to 44 (AMSGGVDS) and methionine 63. The interval 124 to 126 (NPD) is interaction with target base in tRNA. Cysteine 129 functions as the Nucleophile in the catalytic mechanism. Cysteine 129 and cysteine 234 are joined by a disulfide. Glycine 159 is a binding site for ATP. The interval 183-185 (KDQ) is interaction with tRNA. Cysteine 234 functions as the Cysteine persulfide intermediate in the catalytic mechanism. The interval 356–357 (RH) is interaction with tRNA.

This sequence belongs to the MnmA/TRMU family.

Its subcellular location is the mitochondrion. The enzyme catalyses 5-taurinomethyluridine(34) in tRNA + S-sulfanyl-L-cysteinyl-[protein] + AH2 + ATP = 5-taurinomethyl-2-thiouridine(34) in tRNA + L-cysteinyl-[protein] + A + AMP + diphosphate + H(+). Catalyzes the 2-thiolation of uridine at the wobble position (U34) of mitochondrial tRNA(Lys), tRNA(Glu) and tRNA(Gln). Required for the formation of 5-taurinomethyl-2-thiouridine (tm5s2U) of mitochondrial tRNA(Lys), tRNA(Glu), and tRNA(Gln) at the wobble position. ATP is required to activate the C2 atom of the wobble base. This Schizosaccharomyces pombe (strain 972 / ATCC 24843) (Fission yeast) protein is Mitochondrial tRNA-specific 2-thiouridylase 1.